We begin with the raw amino-acid sequence, 315 residues long: tRNA pseudouridine synthase B (315 aa).

The Nucleophile role is filled by Asp54.

Belongs to the pseudouridine synthase TruB family. Type 1 subfamily.

It carries out the reaction uridine(55) in tRNA = pseudouridine(55) in tRNA. Its function is as follows. Responsible for synthesis of pseudouridine from uracil-55 in the psi GC loop of transfer RNAs. The polypeptide is tRNA pseudouridine synthase B (Agrobacterium fabrum (strain C58 / ATCC 33970) (Agrobacterium tumefaciens (strain C58))).